We begin with the raw amino-acid sequence, 236 residues long: Putative N-acetylmannosamine-6-phosphate 2-epimerase (236 aa).

This sequence belongs to the NanE family.

The enzyme catalyses an N-acyl-D-glucosamine 6-phosphate = an N-acyl-D-mannosamine 6-phosphate. The protein operates within amino-sugar metabolism; N-acetylneuraminate degradation; D-fructose 6-phosphate from N-acetylneuraminate: step 3/5. Its function is as follows. Converts N-acetylmannosamine-6-phosphate (ManNAc-6-P) to N-acetylglucosamine-6-phosphate (GlcNAc-6-P). The polypeptide is Putative N-acetylmannosamine-6-phosphate 2-epimerase (Listeria welshimeri serovar 6b (strain ATCC 35897 / DSM 20650 / CCUG 15529 / CIP 8149 / NCTC 11857 / SLCC 5334 / V8)).